A 493-amino-acid chain; its full sequence is Transcript termination protein A18 (493 aa).

The Helicase ATP-binding domain occupies 100–256 (MIESKRPLYI…NSIINIAKLS (157 aa)). 113 to 120 (LACGFGKT) serves as a coordination point for ATP. Residues 206–209 (DESH) carry the DESH box motif.

The protein belongs to the helicase family. Poxviruses subfamily. In terms of assembly, interacts with G2. Might be part of a transcription complex composed at least of G2, A18, and H5.

The protein resides in the virion. DNA helicase which seems to act as a postreplicative transcription termination factor. Involved in ATP-dependent release of nascent RNA. Forms a stable complex with single-stranded DNA, and to a lesser extent RNA. The protein is Transcript termination protein A18 of Homo sapiens (Human).